The primary structure comprises 263 residues: Complement control protein C3 (263 aa).

A signal peptide spans 1–19 (MKVESVTFLTLLGIGCVLS). Sushi domains are found at residues 20-83 (CCTI…QCIK), 84-145 (RRCP…ICES), 146-203 (VKCQ…TCQI), and 204-263 (VKCP…KCVR). 8 cysteine pairs are disulfide-bonded: Cys-21/Cys-70, Cys-54/Cys-81, Cys-86/Cys-126, Cys-112/Cys-143, Cys-148/Cys-190, Cys-176/Cys-201, Cys-206/Cys-248, and Cys-234/Cys-261.

It belongs to the receptors of complement activation (RCA) family. In terms of assembly, heterodimer with A56 protein; disulfide-linked.

Its subcellular location is the virion membrane. The protein resides in the host cell membrane. It localises to the secreted. In terms of biological role, serves to protect the virus against complement attack by inhibiting both classical and alternative pathways of complement activation. Binds C3b and C4b. The chain is Complement control protein C3 from Vaccinia virus (strain Copenhagen) (VACV).